The primary structure comprises 673 residues: uncharacterized protein (673 aa).

Positions 1–24 are cleaved as a signal peptide; it reads MKIHNIIKIIIVVCLEGFALTSFA. 6 consecutive transmembrane segments (helical) span residues 224–244, 253–273, 410–430, 436–456, 469–489, and 562–582; these read NAIGAALILYVMFFAFNMVLN, IALFVIKLLFVTYFSIGLGPL, IILISGLVFAVIFLSILLYFI, CMITIYVMTYVSPIFIPMMLF, VSLSCALQPAVVAGFIALLIT, and VVSILAELLCVLVFSVIFYYF. Positions 624-673 are disordered; it reads AQATQGKPPSSGDMPGDGGSKRSEGQKGDDSFISSGGNSSGDSLSSSGGK. Residues 642-653 show a composition bias toward basic and acidic residues; the sequence is GSKRSEGQKGDD. Positions 654–673 are enriched in low complexity; it reads SFISSGGNSSGDSLSSSGGK.

Belongs to the TrbL/VirB6 family.

The protein resides in the cell membrane. This is an uncharacterized protein from Rickettsia bellii (strain RML369-C).